The following is a 362-amino-acid chain: 3-dehydroquinate synthase (362 aa).

NAD(+) is bound by residues 71 to 76, 105 to 109, 129 to 130, Lys-142, Lys-151, and 169 to 172; these read DGEQYK, GVVGD, TT, and CLKT. Residues Glu-184, His-248, and His-265 each coordinate Zn(2+).

It belongs to the sugar phosphate cyclases superfamily. Dehydroquinate synthase family. Requires Co(2+) as cofactor. Zn(2+) serves as cofactor. NAD(+) is required as a cofactor.

It localises to the cytoplasm. The enzyme catalyses 7-phospho-2-dehydro-3-deoxy-D-arabino-heptonate = 3-dehydroquinate + phosphate. It participates in metabolic intermediate biosynthesis; chorismate biosynthesis; chorismate from D-erythrose 4-phosphate and phosphoenolpyruvate: step 2/7. Catalyzes the conversion of 3-deoxy-D-arabino-heptulosonate 7-phosphate (DAHP) to dehydroquinate (DHQ). This Yersinia pseudotuberculosis serotype O:1b (strain IP 31758) protein is 3-dehydroquinate synthase.